The following is a 191-amino-acid chain: Lipoprotein signal peptidase (191 aa).

3 consecutive transmembrane segments (helical) span residues Val-26–Trp-46, Ala-84–Trp-104, and Phe-110–Leu-130. Catalysis depends on residues Asp-137 and Asp-163. Residues Phe-156–Ala-176 form a helical membrane-spanning segment.

The protein belongs to the peptidase A8 family.

The protein resides in the cell membrane. The catalysed reaction is Release of signal peptides from bacterial membrane prolipoproteins. Hydrolyzes -Xaa-Yaa-Zaa-|-(S,diacylglyceryl)Cys-, in which Xaa is hydrophobic (preferably Leu), and Yaa (Ala or Ser) and Zaa (Gly or Ala) have small, neutral side chains.. It participates in protein modification; lipoprotein biosynthesis (signal peptide cleavage). Its function is as follows. This protein specifically catalyzes the removal of signal peptides from prolipoproteins. This Deinococcus radiodurans (strain ATCC 13939 / DSM 20539 / JCM 16871 / CCUG 27074 / LMG 4051 / NBRC 15346 / NCIMB 9279 / VKM B-1422 / R1) protein is Lipoprotein signal peptidase.